A 274-amino-acid polypeptide reads, in one-letter code: Fatty-acid O-methyltransferase (274 aa).

This sequence belongs to the methyltransferase superfamily.

It carries out the reaction a fatty acid + S-adenosyl-L-methionine = a fatty acid methyl ester + S-adenosyl-L-homocysteine. Functionally, O-methyltransferase that modifies the hydroxy group of the fatty acids. Oleate is the most effective fatty acid acceptor. This Mycolicibacterium smegmatis (strain ATCC 700084 / mc(2)155) (Mycobacterium smegmatis) protein is Fatty-acid O-methyltransferase (mtf2).